The following is an 886-amino-acid chain: DNA mismatch repair protein MutS (886 aa).

Position 641–648 (641–648 (GPNMAGKS)) interacts with ATP.

This sequence belongs to the DNA mismatch repair MutS family.

This protein is involved in the repair of mismatches in DNA. It is possible that it carries out the mismatch recognition step. This protein has a weak ATPase activity. The polypeptide is DNA mismatch repair protein MutS (Rickettsia akari (strain Hartford)).